A 499-amino-acid chain; its full sequence is ATP synthase subunit alpha, chloroplastic (499 aa).

170–177 (GDRQTGKT) is a binding site for ATP.

Belongs to the ATPase alpha/beta chains family. F-type ATPases have 2 components, CF(1) - the catalytic core - and CF(0) - the membrane proton channel. CF(1) has five subunits: alpha(3), beta(3), gamma(1), delta(1), epsilon(1). CF(0) has four main subunits: a, b, b' and c.

It is found in the plastid. Its subcellular location is the chloroplast thylakoid membrane. It catalyses the reaction ATP + H2O + 4 H(+)(in) = ADP + phosphate + 5 H(+)(out). Its function is as follows. Produces ATP from ADP in the presence of a proton gradient across the membrane. The alpha chain is a regulatory subunit. The chain is ATP synthase subunit alpha, chloroplastic from Emiliania huxleyi (Coccolithophore).